We begin with the raw amino-acid sequence, 247 residues long: DNA repair protein RecO (247 aa).

It belongs to the RecO family.

Its function is as follows. Involved in DNA repair and RecF pathway recombination. The chain is DNA repair protein RecO from Caldanaerobacter subterraneus subsp. tengcongensis (strain DSM 15242 / JCM 11007 / NBRC 100824 / MB4) (Thermoanaerobacter tengcongensis).